We begin with the raw amino-acid sequence, 157 residues long: MTIKLVCIGKTDKKELEALIKIYSDRLQHYIKFEFEIIPDLKKTKNLDENQQKSKEGELILSGVQNSDFVVLLDENGKQFSSESFSEYIQKRMNTGLKRLIFVIGGPYGFSEEVYKRADSKISLSKMTFSHQMVRLFFTEQLYRAFTILKNEPYHHR.

S-adenosyl-L-methionine contacts are provided by residues leucine 73, glycine 105, and 124–129 (LSKMTF).

Belongs to the RNA methyltransferase RlmH family. In terms of assembly, homodimer.

It is found in the cytoplasm. The enzyme catalyses pseudouridine(1915) in 23S rRNA + S-adenosyl-L-methionine = N(3)-methylpseudouridine(1915) in 23S rRNA + S-adenosyl-L-homocysteine + H(+). Specifically methylates the pseudouridine at position 1915 (m3Psi1915) in 23S rRNA. The polypeptide is Ribosomal RNA large subunit methyltransferase H (Christiangramia forsetii (strain DSM 17595 / CGMCC 1.15422 / KT0803) (Gramella forsetii)).